The chain runs to 385 residues: MSGSTFGLLFCVTNFGESHGPAIGCVIDGCPPGMALGEADIQPDLDRRRPGTSRHVTQRNEPDQVEILSGVYEGRTTGTPICLLIRNTDQRSKDYGNILDTFRPGHADYTYWRKYGLRDPRGGGRSSARMTAPMVAAGAVAKKWLREQHGITFTGWMSALGELPIPFEDESQIPLNPFYAPNAAVVPQLEAYMDALRKSGDSVGARIEVRARGVPAGLGEPLYDKLDADIAYAMMGINAVKGVEIGAGFASVAQRGTQHGDELTPAGFASNNAGGVLGGISTGQDLVVSIAIKPTSSIRSPKASIDRAGAPTVVETLGRHDPCVGIRATPIAEAMLALVVMDHALRQRAQCGDVQLPIPPLAAQAPRTETAPATPPLDAGDDIEA.

Residues 43–63 (PDLDRRRPGTSRHVTQRNEPD) are disordered. NADP(+) contacts are provided by Arg-48 and Arg-54. FMN-binding positions include 125–127 (RSS), 238–239 (NA), Gly-278, 293–297 (KPTSS), and Arg-319. The span at 363 to 372 (AQAPRTETAP) shows a compositional bias: low complexity. Residues 363-385 (AQAPRTETAPATPPLDAGDDIEA) form a disordered region.

Belongs to the chorismate synthase family. As to quaternary structure, homotetramer. FMNH2 serves as cofactor.

The enzyme catalyses 5-O-(1-carboxyvinyl)-3-phosphoshikimate = chorismate + phosphate. It functions in the pathway metabolic intermediate biosynthesis; chorismate biosynthesis; chorismate from D-erythrose 4-phosphate and phosphoenolpyruvate: step 7/7. Catalyzes the anti-1,4-elimination of the C-3 phosphate and the C-6 proR hydrogen from 5-enolpyruvylshikimate-3-phosphate (EPSP) to yield chorismate, which is the branch point compound that serves as the starting substrate for the three terminal pathways of aromatic amino acid biosynthesis. This reaction introduces a second double bond into the aromatic ring system. This is Chorismate synthase from Leptothrix cholodnii (strain ATCC 51168 / LMG 8142 / SP-6) (Leptothrix discophora (strain SP-6)).